A 504-amino-acid chain; its full sequence is NADH-quinone oxidoreductase subunit N (504 aa).

14 consecutive transmembrane segments (helical) span residues 9–29 (IALLPIIVIGITIVGIMLSII), 38–58 (AVLTIIGMIIASVSSLLHMMW), 78–98 (VLYVILIMFVGIASSILGYVW), 114–134 (LLIASIGGILLVITNHLIVLF), 135–155 (LGIELISISICGLISYPVFSK), 164–184 (YIILSGVSSSFLLFGIVFIYC), 216–236 (IVIGLSMMMIGMGFKLSCVPF), 254–274 (YLATGSKIAVTAVLMRFLLIL), 282–302 (LHIFLSVSACCSMLFGSLMAI), 309–329 (RMLAYSSITNAGYLLIALIAL), 341–361 (ISVYLVSYLFANVGVWGIVNI), 392–412 (VIFVIAILSLAGIPMTFGFIG), 425–447 (LWFLTVMMIISSIISMFYYLKII), and 476–496 (FMVIIVAIIILFFGVYPQFIV).

The protein belongs to the complex I subunit 2 family. As to quaternary structure, NDH-1 is composed of 13 different subunits. Subunits NuoA, H, J, K, L, M, N constitute the membrane sector of the complex.

Its subcellular location is the cell inner membrane. It catalyses the reaction a quinone + NADH + 5 H(+)(in) = a quinol + NAD(+) + 4 H(+)(out). Its function is as follows. NDH-1 shuttles electrons from NADH, via FMN and iron-sulfur (Fe-S) centers, to quinones in the respiratory chain. The immediate electron acceptor for the enzyme in this species is believed to be ubiquinone. Couples the redox reaction to proton translocation (for every two electrons transferred, four hydrogen ions are translocated across the cytoplasmic membrane), and thus conserves the redox energy in a proton gradient. The protein is NADH-quinone oxidoreductase subunit N of Blochmanniella floridana.